The sequence spans 614 residues: 1-deoxy-D-xylulose-5-phosphate synthase (614 aa).

Thiamine diphosphate contacts are provided by residues His74 and 115 to 117 (AHS). Residue Asp146 participates in Mg(2+) binding. Thiamine diphosphate-binding positions include 147–148 (GA), Asn175, Tyr282, and Glu363. Asn175 is a binding site for Mg(2+).

This sequence belongs to the transketolase family. DXPS subfamily. In terms of assembly, homodimer. The cofactor is Mg(2+). Thiamine diphosphate is required as a cofactor.

It carries out the reaction D-glyceraldehyde 3-phosphate + pyruvate + H(+) = 1-deoxy-D-xylulose 5-phosphate + CO2. Its pathway is metabolic intermediate biosynthesis; 1-deoxy-D-xylulose 5-phosphate biosynthesis; 1-deoxy-D-xylulose 5-phosphate from D-glyceraldehyde 3-phosphate and pyruvate: step 1/1. Functionally, catalyzes the acyloin condensation reaction between C atoms 2 and 3 of pyruvate and glyceraldehyde 3-phosphate to yield 1-deoxy-D-xylulose-5-phosphate (DXP). The protein is 1-deoxy-D-xylulose-5-phosphate synthase of Nitrosospira multiformis (strain ATCC 25196 / NCIMB 11849 / C 71).